The chain runs to 179 residues: O-acetyl-ADP-ribose deacetylase (179 aa).

The Macro domain maps to 1–175 (MTSRLQVIQG…LYARLLTQQG (175 aa)). Substrate-binding positions include 11-12 (DI), asparagine 25, 33-35 (GVD), and 122-126 (STGVY). The active-site Proton acceptor is the aspartate 35.

It belongs to the MacroD-type family. YmdB subfamily. In terms of assembly, homodimer. Interacts with RNase III.

The catalysed reaction is 3''-O-acetyl-ADP-D-ribose + H2O = ADP-D-ribose + acetate + H(+). It catalyses the reaction 2''-O-acetyl-ADP-D-ribose + H2O = ADP-D-ribose + acetate + H(+). Deacetylates O-acetyl-ADP ribose to yield ADP-ribose and free acetate. Down-regulates ribonuclease 3 (RNase III) activity. Acts by interacting directly with the region of the ribonuclease that is required for dimerization/activation. The sequence is that of O-acetyl-ADP-ribose deacetylase from Salmonella gallinarum (strain 287/91 / NCTC 13346).